A 340-amino-acid chain; its full sequence is DNA-directed RNA polymerase subunit alpha (340 aa).

Residues Met1–Glu236 are alpha N-terminal domain (alpha-NTD). The alpha C-terminal domain (alpha-CTD) stretch occupies residues Phe251 to Asn340.

Belongs to the RNA polymerase alpha chain family. As to quaternary structure, homodimer. The RNAP catalytic core consists of 2 alpha, 1 beta, 1 beta' and 1 omega subunit. When a sigma factor is associated with the core the holoenzyme is formed, which can initiate transcription.

It carries out the reaction RNA(n) + a ribonucleoside 5'-triphosphate = RNA(n+1) + diphosphate. In terms of biological role, DNA-dependent RNA polymerase catalyzes the transcription of DNA into RNA using the four ribonucleoside triphosphates as substrates. The chain is DNA-directed RNA polymerase subunit alpha from Rickettsia prowazekii (strain Madrid E).